We begin with the raw amino-acid sequence, 363 residues long: Methyltransferase pynC (363 aa).

S-adenosyl-L-methionine-binding positions include 199–200, Asp-225, 254–255, Arg-270, and Arg-271; these read GG and SF.

This sequence belongs to the class I-like SAM-binding methyltransferase superfamily. Cation-independent O-methyltransferase family.

It participates in secondary metabolite biosynthesis. Methyltransferase; part of the gene cluster that mediates the biosynthesis of pyranonigrins, a family of antioxidative compounds. The first step of pyranonigrins biosynthesis is performed by the hybrid PKS-NRPS synthetase that condenses 6 malonyl-CoA units to an acetyl starter unit, to form a 1,3,5-trioxotetradecane-6,8-dienyl-ACP. The enoyl reductase (ER) domain of pynA is likely to be functional during the first two rounds of polyketide chain extension, to generate the saturated C-C bonds of the alkyl side chain. PynA subsequently forms the amide bond between the acyl chain and L-serine. Although pynA has a terminal reductase domain, it appears to require the thioesterase pynI for the release of the straight-chain intermediate from pynA via the formation of a tetramic acid pyranonigrin J. The methyltransferase pynC then coverts pyranonigrin J to pyranonigrin I via N-methylation. The FAD-dependent monooxygenase pynG catalyzes an epoxidation-mediated cyclization to form the dihydro-gamma-pyrone moiety, followed by pynD-catalyzed oxidation of the alcohol to the ketone and enolization to yield the characteristic tetramic acid-fused gamma-pyrone core of pyranonigrin H. Pyranonigrin H is substrate of pynH for dehydration-mediated exo-methylene formation from the serine side chain to produce pyranonigrin E, before the oxidase pynE reduces the exo-methylene of pyranonigrin E into a pendant methyl to form pyranonigrin G. The FAD-linked oxidoreductase pynB performs the reverse reaction and converts pyranonigrin G back to pyranonigrin E. The chain is Methyltransferase pynC from Aspergillus niger (strain ATCC MYA-4892 / CBS 513.88 / FGSC A1513).